The following is a 475-amino-acid chain: MEIOTIC F-BOX protein MOF (475 aa).

Residues 1 to 58 (MRRERDATQIPENPMEGIPQTAAAAAAAAAAEASEPPRKRARVDGGGGGAGEEEEDRL) are disordered. A compositionally biased stretch (low complexity) spans 22–33 (AAAAAAAAAAEA). Positions 55–91 (EDRLSDLPDCLLEDILAHLGSRQAVQTSVLSRRWRNL) constitute an F-box domain.

This sequence belongs to the F-box protein family. FBX subfamily. Part of a SCF (SKP1-CUL1-F-box protein) E3 ubiquitin-protein ligase complex. Interacts (via F-box domain) directly with SKP1. As to expression, highly expressed in the stem, leaf and in the anther during meiosis. Weakly expressed in roots and lemma/palea.

Its subcellular location is the nucleus. It localises to the chromosome. It participates in protein modification; protein ubiquitination. Its function is as follows. Probable component of a SCF (SKP1-CULLIN-F-box protein) E3 ubiquitin-protein ligase complex and may function through the ubiquitin-mediated protein degradation or signaling pathway. Required for male meiotic prophase I progression. Required for telomere bouquet formation, homologous chromosome pairing and for the formation of the synaptonemal complex (SC), which stabilizes initial chromosomal axial associations and promotes crossover formation. Involved in meiotic DNA double-strand break (DSB) end-processing and repair, and is important in the recruitment of DSB repair proteins to the DSB sites. This Oryza sativa subsp. japonica (Rice) protein is MEIOTIC F-BOX protein MOF.